Reading from the N-terminus, the 366-residue chain is Ferrochelatase (366 aa).

Fe cation is bound by residues histidine 210 and glutamate 293.

This sequence belongs to the ferrochelatase family.

Its subcellular location is the cytoplasm. The enzyme catalyses heme b + 2 H(+) = protoporphyrin IX + Fe(2+). It participates in porphyrin-containing compound metabolism; protoheme biosynthesis; protoheme from protoporphyrin-IX: step 1/1. Catalyzes the ferrous insertion into protoporphyrin IX. This chain is Ferrochelatase, found in Leptospira borgpetersenii serovar Hardjo-bovis (strain L550).